The chain runs to 612 residues: Chaperone protein DnaK (612 aa).

Phosphothreonine; by autocatalysis is present on T174. The tract at residues 579-612 (GSAGTGAGSQAGSAAGSGDGQSMDAEFKVKDEDK) is disordered. The span at 581–597 (AGTGAGSQAGSAAGSGD) shows a compositional bias: gly residues. Residues 603-612 (AEFKVKDEDK) show a composition bias toward basic and acidic residues.

Belongs to the heat shock protein 70 family.

Functionally, acts as a chaperone. The polypeptide is Chaperone protein DnaK (Symbiobacterium thermophilum (strain DSM 24528 / JCM 14929 / IAM 14863 / T)).